The chain runs to 118 residues: uncharacterized protein (118 aa).

The next 4 membrane-spanning stretches (helical) occupy residues 5–20 (IVFY…SVVM), 25–42 (VIRT…LLYF), 53–73 (ALAI…FIIL), and 83–103 (LFFT…SLSI).

The protein resides in the cell membrane. This is an uncharacterized protein from Bacillus subtilis (strain 168).